A 181-amino-acid polypeptide reads, in one-letter code: MPYKTAIDCIEELATQCFLSKLTDDDVSTFRRVCSKENDIIKLALRIPRTIDYTSILRLLYDTLPLRSLSFNEALPLFCYSIDPAQQRQCDLRFYLRDVVKLARPRKRLEMQKALLQWLPSLLSDVTLQLLNDIRIRFEEIQPNIRQTVLQIYDRTCYPSLNFEHPNLGVFPETDSIFEPV.

Plays a role in 2-micron plasmid partitioning. Antagonizes transcriptional repression of recombinase FLP by REP1-REP2. Regulates both stability and copy number of the plasmid by blocking the formation of the REP1-REP2 repressor complex. The sequence is that of Trans-acting factor D from Saccharomyces cerevisiae (strain ATCC 204508 / S288c) (Baker's yeast).